A 199-amino-acid polypeptide reads, in one-letter code: Hematopoietic prostaglandin D synthase (199 aa).

The region spanning 2–79 is the GST N-terminal domain; that stretch reads PNYKLTYFNM…YLTKNTDLAG (78 aa). Residues Tyr8, Arg14, Trp39, 49-51, and 63-64 each bind glutathione; these read GKI and QS. The region spanning 81–199 is the GST C-terminal domain; the sequence is TEMEQCHVDA…WIKRRPQTKL (119 aa).

Belongs to the GST superfamily. Sigma family. As to quaternary structure, homodimer. Glutathione is required as a cofactor. Expressed in a number of megakaryocytic cell lines but not in platelets. Highly expressed in adipose tissue, macrophages and placenta. Also expressed at lower levels in lung, heart, lymph nodes, appendix, bone marrow and fetal liver.

It localises to the cytoplasm. The enzyme catalyses prostaglandin H2 = prostaglandin D2. It carries out the reaction RX + glutathione = an S-substituted glutathione + a halide anion + H(+). The catalysed reaction is 2-glyceryl-prostaglandin H2 = 2-glyceryl-prostaglandin D2. With respect to regulation, prostaglandin PGD2 synthesis is stimulated by calcium and magnesium ions. One calcium or magnesium ion is bound between the subunits of the homodimer. The interactions with the protein are for the most part mediated via water molecules. Magnesium increases the affinity for glutathione, while calcium has no effect on the affinity for glutathione. Its function is as follows. Bifunctional enzyme which catalyzes both the conversion of PGH2 to PGD2, a prostaglandin involved in smooth muscle contraction/relaxation and a potent inhibitor of platelet aggregation, and the conjugation of glutathione with a wide range of aryl halides and organic isothiocyanates. Also exhibits low glutathione-peroxidase activity towards cumene hydroperoxide. The chain is Hematopoietic prostaglandin D synthase from Homo sapiens (Human).